The chain runs to 88 residues: Small ribosomal subunit protein bS20 (88 aa).

This sequence belongs to the bacterial ribosomal protein bS20 family.

In terms of biological role, binds directly to 16S ribosomal RNA. The polypeptide is Small ribosomal subunit protein bS20 (Bartonella tribocorum (strain CIP 105476 / IBS 506)).